The following is a 215-amino-acid chain: Nascent polypeptide-associated complex subunit alpha-2 (215 aa).

A disordered region spans residues M1–A51. The span at V9 to G32 shows a compositional bias: polar residues. 2 positions are modified to phosphoserine: S43 and S132. In terms of domain architecture, NAC-A/B spans S70–A135. K142 carries the N6-acetyllysine; alternate modification. Residue K142 forms a Glycyl lysine isopeptide (Lys-Gly) (interchain with G-Cter in SUMO2); alternate linkage. Residue T161 is modified to Phosphothreonine. Phosphoserine occurs at positions 166, 186, 191, and 203. A UBA domain is found at V176 to L213. T214 bears the Phosphothreonine mark.

The protein belongs to the NAC-alpha family. As to quaternary structure, part of the nascent polypeptide-associated complex (NAC), consisting of NACA and BTF3. NAC associates with ribosomes through the BTF3 subunit. Both subunits can contact nascent polypeptide chains. In terms of tissue distribution, expressed specifically in testis and skeletal muscle.

It localises to the cytoplasm. It is found in the nucleus. Functionally, prevents inappropriate targeting of non-secretory polypeptides to the endoplasmic reticulum (ER). Binds to nascent polypeptide chains as they emerge from the ribosome and blocks their interaction with the signal recognition particle (SRP), which normally targets nascent secretory peptides to the ER. Also reduces the inherent affinity of ribosomes for protein translocation sites in the ER membrane (M sites). The polypeptide is Nascent polypeptide-associated complex subunit alpha-2 (NACA2) (Homo sapiens (Human)).